A 691-amino-acid chain; its full sequence is Pentatricopeptide repeat-containing protein At5g27110 (691 aa).

16 PPR repeats span residues 38 to 68, 70 to 104, 106 to 140, 141 to 171, 172 to 206, 207 to 241, 242 to 272, 273 to 307, 308 to 342, 343 to 373, 374 to 408, 409 to 443, 444 to 474, 475 to 509, 510 to 540, and 546 to 576; these read DVVL…FDIR, DVYI…SICV, DSFT…GYVC, DVVV…MPER, DVAS…GFEP, NSVS…GFEL, DEYV…MPRK, SLVA…GTRP, SQTT…VVNA, DIYV…TQKD, VAES…GVKP, DVVT…RLET, DELL…IPKK, DVVS…GLKP, DGVT…MRSK, and IIEH…TPET. The tract at residues 582–657 is type E motif; the sequence is LLSTLFSACC…KPGCSWIEMS (76 aa). Residues 658–688 are type E(+) motif; sequence DKVCHFFAEDRSHLRAENVYECLALLSGHME.

The protein belongs to the PPR family. PCMP-E subfamily.

The protein is Pentatricopeptide repeat-containing protein At5g27110 (PCMP-E14) of Arabidopsis thaliana (Mouse-ear cress).